Here is an 89-residue protein sequence, read N- to C-terminus: Prostaglandin E2 receptor EP3 subtype (89 aa).

The chain crosses the membrane as a helical span at residues 1 to 18 (GVWLAVLAFALLPVLGVG). Residues 19-48 (QYTIQWPGTWCFISTGPGGNGTNSRQNWGN) are Extracellular-facing. N-linked (GlcNAc...) asparagine glycosylation occurs at N38. A helical transmembrane segment spans residues 49 to 74 (VFFASDFAILGLSALVVTFACNLATI). Residues 75-89 (KALVSRCRAKATASQ) are Cytoplasmic-facing.

Belongs to the G-protein coupled receptor 1 family. Interacts (via C-terminus) with MKLN1.

It is found in the cell membrane. Functionally, receptor for prostaglandin E2 (PGE2). Required for normal development of fever in response to pyrinogens, including IL1B, prostaglandin E2 and bacterial lipopolysaccharide (LPS). Required for normal potentiation of platelet aggregation by prostaglandin E2, and thus plays a role in the regulation of blood coagulation. Required for increased HCO3(-) secretion in the duodenum in response to mucosal acidification, and thereby contributes to the protection of the mucosa against acid-induced ulceration. Not required for normal kidney function, normal urine volume and osmolality. In Ovis aries (Sheep), this protein is Prostaglandin E2 receptor EP3 subtype (PTGER3).